The primary structure comprises 189 residues: Protein Rex (189 aa).

Positions 1-16 (MPKTRRRPRRSQRKRP) are enriched in basic residues. Residues 1-27 (MPKTRRRPRRSQRKRPPTPWPTSQGLD) form a disordered region. Residues 2-18 (PKTRRRPRRSQRKRPPT) carry the Nuclear localization signal, and RNA-binding (RxRE) motif. The interval 56 to 70 (RPAYIVTPYWPPVQS) is homomultimerization. Position 70 is a phosphoserine; by host (S70). A disordered region spans residues 73 to 189 (SPGTPSMDAL…PPSPGPSCPT (117 aa)). The span at 80 to 94 (DALSAQLYSSLSLDS) shows a compositional bias: low complexity. The Nuclear export signal signature appears at 82–93 (LSAQLYSSLSLD). The segment at 123-131 (PSSRPCANT) is homomultimerization. Residues 143 to 164 (LGSTSQPCLFQTPDSGPKTCTP) show a composition bias toward polar residues. Phosphothreonine; by host is present on T174. A Phosphoserine; by host modification is found at S177. Over residues 178-189 (FPPPSPGPSCPT) the composition is skewed to pro residues.

This sequence belongs to the deltaretrovirus Rex protein family. In terms of assembly, homomultimer. Multimeric assembly is essential for activity and involves XPO1. Binds to human XPO1 and KPNB1. Interacts (via N-terminal nuclear localization signal) with human NPM1.

It localises to the host nucleus. The protein localises to the host nucleolus. It is found in the host cytoplasm. In terms of biological role, rex escorts unspliced gag-pro-pol and singly spliced env mRNAs out of the nucleus of infected cells. These mRNAs carry a recognition sequence called Rex responsive element (RxRE or XRE) located at the 3' region of the long terminal repeat (LTR). This function is essential since most HTLV proteins are translated from unspliced or partially spliced pre-mRNAs that cannot exit the nucleus by the pathway used by fully processed cellular mRNAs. Rex itself is translated from a fully spliced mRNA that probably readily exits the nucleus. Rex's nuclear localization signal (NLS) binds directly to KPNB1/importin beta-1 without previous binding to KPNA1/importin alpha-1. KPNB1 binds to the GDP bound form of RAN (Ran-GDP) and targets Rex to the nucleus. In the nucleus, the conversion from Ran-GDP to Ran-GTP dissociates Rex from KPNB1 and allows Rex's binding to the RRE in viral pre-mRNAs. Rex multimerizes on the RRE via cooperative assembly. This multimerization is critical for its full biological activity, since it may shield the viral RNA from being spliced or down-regulated, and probably exposes Rex's nuclear export signal (NES) to the surface. Rex can then form a complex with XPO1/CRM1, RANBP3 and Ran-GTP, leading to nuclear export of the complex. Conversion from Ran-GTP to Ran-GDP mediates dissociation of the Rex/RRE/XPO1/RANBP3/RAN complex, so that Rex can return to the nucleus for a subsequent round of export. The chain is Protein Rex from Human T-cell leukemia virus 1 (strain Japan ATK-1 subtype A) (HTLV-1).